The chain runs to 161 residues: Putative pre-16S rRNA nuclease (161 aa).

A disordered region spans residues 141 to 161 (AAGSPPGALVPRNRVDPDRHA).

This sequence belongs to the YqgF nuclease family.

It localises to the cytoplasm. Functionally, could be a nuclease involved in processing of the 5'-end of pre-16S rRNA. This Clavibacter michiganensis subsp. michiganensis (strain NCPPB 382) protein is Putative pre-16S rRNA nuclease.